Reading from the N-terminus, the 163-residue chain is Staphylokinase (163 aa).

The signal sequence occupies residues 1 to 27; the sequence is MLKRGLLFLTVLLLLFSFSSITNEVSA.

Belongs to the staphylokinase family.

The protein resides in the secreted. Functionally, potent plasminogen activator that converts plasminogen into plasmin. It forms a 1:1 complex with plasmin, which in turn activates other plasminogen molecules. In Staphylococcus aureus (strain MRSA252), this protein is Staphylokinase (sak).